Here is a 600-residue protein sequence, read N- to C-terminus: Zinc metalloproteinase-disintegrin-like cobrin (600 aa).

A signal peptide spans 1 to 8; that stretch reads MIQLSWSS. A propeptide spanning residues 9–179 is cleaved from the precursor; the sequence is IILESGNVND…DEPIKKTSLL (171 aa). Residues 193–388 enclose the Peptidase M12B domain; the sequence is KYIEFYMVVD…DRPQCILNKP (196 aa). Residues Glu196 and Asp280 each contribute to the Ca(2+) site. 3 cysteine pairs are disulfide-bonded: Cys304-Cys383, Cys344-Cys367, and Cys346-Cys351. His329, His333, and His339 together coordinate Zn(2+). Ca(2+)-binding residues include Cys383, Asn386, Ile398, Asn401, Phe403, Glu405, Glu408, and Asp411. The Disintegrin domain maps to 396–482; that stretch reads PPICGNYFVE…ECPTDVFQRN (87 aa). 14 disulfides stabilise this stretch: Cys399–Cys428, Cys410–Cys423, Cys412–Cys418, Cys422–Cys445, Cys436–Cys442, Cys441–Cys467, Cys454–Cys474, Cys461–Cys492, Cys486–Cys497, Cys504–Cys554, Cys519–Cys562, Cys532–Cys542, Cys549–Cys588, and Cys582–Cys593. Asn424 is a glycosylation site (N-linked (GlcNAc...) asparagine). The D/ECD-tripeptide motif lies at 460–462; sequence DCD. Ca(2+) is bound by residues Asp462, Leu463, Glu465, Asp477, and Val478.

The protein belongs to the venom metalloproteinase (M12B) family. P-III subfamily. P-IIIa sub-subfamily. Monomer. The cofactor is Zn(2+). In terms of tissue distribution, expressed by the venom gland.

It is found in the secreted. Its function is as follows. Snake venom zinc metalloproteinase that may cleave complement protein C3 into C3c-like (C3o). This is Zinc metalloproteinase-disintegrin-like cobrin from Naja kaouthia (Monocled cobra).